We begin with the raw amino-acid sequence, 522 residues long: Colicin-E1 (522 aa).

Disordered regions lie at residues 26–52 (NGTP…AAIH) and 136–165 (EEKA…REKA). Residues 30–42 (DGSGSGGGGGKGG) are compositionally biased toward gly residues. 2 helical membrane-spanning segments follow: residues 471–487 (AADA…FSLL) and 494–510 (IWGI…YIDK).

It belongs to the channel forming colicin family.

The protein localises to the cell membrane. Its function is as follows. This colicin is a channel-forming colicin. This class of transmembrane toxins depolarize the cytoplasmic membrane, leading to dissipation of cellular energy. Functionally, colicins are polypeptide toxins produced by and active against E.coli and closely related bacteria. This chain is Colicin-E1 (cea), found in Escherichia coli.